We begin with the raw amino-acid sequence, 174 residues long: Gamma-crystallin E (174 aa).

Beta/gamma crystallin 'Greek key' domains follow at residues Gly2 to Ser40 and Gly41 to Pro83. Positions His84–Ser87 are connecting peptide. Beta/gamma crystallin 'Greek key' domains lie at His88–Glu128 and Gly129–Met171.

This sequence belongs to the beta/gamma-crystallin family. As to expression, detected in the superior olivary complex of the auditory hindbrain.

Functionally, crystallins are the dominant structural components of the vertebrate eye lens. The sequence is that of Gamma-crystallin E (Cryge) from Mus musculus (Mouse).